The following is a 207-amino-acid chain: ATP-dependent Clp protease proteolytic subunit (207 aa).

Serine 111 functions as the Nucleophile in the catalytic mechanism. Histidine 136 is an active-site residue.

The protein belongs to the peptidase S14 family. Fourteen ClpP subunits assemble into 2 heptameric rings which stack back to back to give a disk-like structure with a central cavity, resembling the structure of eukaryotic proteasomes. Component of the ClpAP and ClpXP complexes.

The protein localises to the cytoplasm. It catalyses the reaction Hydrolysis of proteins to small peptides in the presence of ATP and magnesium. alpha-casein is the usual test substrate. In the absence of ATP, only oligopeptides shorter than five residues are hydrolyzed (such as succinyl-Leu-Tyr-|-NHMec, and Leu-Tyr-Leu-|-Tyr-Trp, in which cleavage of the -Tyr-|-Leu- and -Tyr-|-Trp bonds also occurs).. In terms of biological role, cleaves peptides in various proteins in a process that requires ATP hydrolysis. Has a chymotrypsin-like activity. Plays a major role in the degradation of misfolded proteins. This Salmonella enteritidis PT4 (strain P125109) protein is ATP-dependent Clp protease proteolytic subunit.